A 156-amino-acid chain; its full sequence is Small ribosomal subunit protein uS7 (156 aa).

This sequence belongs to the universal ribosomal protein uS7 family. As to quaternary structure, part of the 30S ribosomal subunit. Contacts proteins S9 and S11.

Its function is as follows. One of the primary rRNA binding proteins, it binds directly to 16S rRNA where it nucleates assembly of the head domain of the 30S subunit. Is located at the subunit interface close to the decoding center, probably blocks exit of the E-site tRNA. The chain is Small ribosomal subunit protein uS7 from Clavibacter sepedonicus (Clavibacter michiganensis subsp. sepedonicus).